The primary structure comprises 388 residues: Aldolase vrtJ (388 aa).

K241 is modified (N6-(pyridoxal phosphate)lysine).

Belongs to the threonine aldolase family. Requires pyridoxal 5'-phosphate as cofactor.

It functions in the pathway secondary metabolite biosynthesis; terpenoid biosynthesis. Its function is as follows. Aldolase; part of the gene cluster that mediates the biosynthesis of viridicatumtoxin, a tetracycline-like fungal meroterpenoid with a unique, fused spirobicyclic ring system. The first step of the pathway is the production of the malonamoyl-CoA starter unit for the polyketide synthase vrtA. The aldolase vrtJ may be involved in the synthesis of the malonamate substrate for malonamoyl-CoA synthetase vrtB. The polyketide synthase vrtA then may utilize the malonamoyl-CoA starter unit, followed by sequential condensation of eight malonyl-CoA units to form the polyketide backbone. The cyclization of the last ring could be mediated by the lactamase-like protein vrtG. The proposed post-PKS tailoring steps are a hydroxylation at C5 catalyzed the cytochrome P450 monooxygenase vrtE, a hydroxylation at C12a catalyzed by VrtH and/or VrtI, and an O-methylation by the O-methyltransferase vrtF. VrtC is then proposed to catalyze the transfer of a geranyl group synthesized by vrtD to the aromatic C ring of the tetracyclic polyketide intermediate of viridicatumtoxin to yield previridicatumtoxin. Finally, the cytochrome P450 monooxygenase vrtK catalyzes the spirocyclization of the geranyl moiety of previridicatumtoxin to afford viridicatumtoxin. This chain is Aldolase vrtJ, found in Penicillium aethiopicum.